The primary structure comprises 585 residues: Cytochrome P450 monooxygenase AOL_s00215g278 (585 aa).

Position 518 (cysteine 518) interacts with heme.

The protein belongs to the cytochrome P450 family. Heme is required as a cofactor.

Its pathway is secondary metabolite biosynthesis; terpenoid biosynthesis. Cytochrome P450 monooxygenase; part of the gene cluster that mediates the biosynthesis of sesquiterpenyl epoxy-cyclohexenoids (SECs) such as anthrobotrisins and arthrosporols, metabolites that possess a novel hybrid carbon skeleton consisting of a polyketide-derived epoxycyclohexenol combined with a terpenoid-derived monocyclic sesquiterpenol substructure (PKS-PTS hybrid). The SEC pathway plays an important role for fungal soil colonization via decreasing fungal nematode-capturing ability. Within the pathway, the cytochrome P450 monooxygenase AOL_s00215g278 plays a role in the oxygenation of the phenol moiety, most likely in the epoxy formation. The pathway begins with the biosynthesis of 6-methylsalicylic acid (6-MSA), the first precursor of the polyketide-derived epoxycyclohexenol in arthrosporols, by the polyketide synthase (PKS) AOL_s00215g283 via condensation of 1 acetate and 3 malonate units. The 6-methylsalicylic acid decarboxylase AOL_s00215g281 then catalyzes the decarboxylation of 6-methylsalicylic acid to yield m-cresol. The cytochrome P450 monooxygenase AOL_s00215g282 further oxidizes m-cresol to yield toluquinol. With the assistance of the oxidoreductase AOL_s00215g277, the polyprenyl transferase AOL_s00215g276 catalyzes the farnesylation of toluquinol to produce farnesyl hydroquinone, the hybrid precursor for biosynthesis of SECs. Farnesyl hydroquinone undergoes epoxidation and then subsequent dehydrogenation to form farnesyl epoxy-quinone, the first and simplest SEC. The cytochrome P450 monooxygenase AOL_s00215g278 and the FAD-dependent monooxygenase AOL_s00215g279 might be involved in the oxygenation of the phenol moiety, most likely in the epoxy formation. The cytochrome P450 monooxygenases AOL_s00215g274 and AOL_s00215g280 are involved in specific regional ketone reductions at respectively C-4 and C-1 of farnesyl epoxy-quinone PubMed:33823587. In Arthrobotrys oligospora (strain ATCC 24927 / CBS 115.81 / DSM 1491) (Nematode-trapping fungus), this protein is Cytochrome P450 monooxygenase AOL_s00215g278.